A 332-amino-acid chain; its full sequence is Stage II sporulation protein B (332 aa).

The segment covering 1–10 (MKKRKNKKNS) has biased composition (basic residues). Positions 1–71 (MKKRKNKKNS…EHPDEDEFNW (71 aa)) are disordered. Basic and acidic residues predominate over residues 11–27 (KAAEKALKVTINGKEET). The helical transmembrane segment at 112–132 (AATIAFAAVIGTGLGLFALNI) threads the bilayer. The interval 139–174 (SAPASLEDSLGSQTAKAGDTSADKQTSGAEKQAAQT) is disordered. The segment covering 161-174 (DKQTSGAEKQAAQT) has biased composition (polar residues). The SPOR domain maps to 175–250 (EGTYKTYAVQ…SDFEAWGGKE (76 aa)).

The protein localises to the cell membrane. Its activity is regulated as follows. Appears to be degraded early in engulfment, in correlation with its loss from polar septa. Its function is as follows. Facilitates the rapid and spatially regulated dissolution of septal peptidoglycan. This is Stage II sporulation protein B from Bacillus subtilis (strain 168).